The sequence spans 324 residues: Beta-ketoacyl-[acyl-carrier-protein] synthase III (324 aa).

Residues C112 and H250 contribute to the active site. The ACP-binding stretch occupies residues 251–255; that stretch reads QANIR. The active site involves N280.

The protein belongs to the thiolase-like superfamily. FabH family. As to quaternary structure, homodimer.

The protein localises to the cytoplasm. The catalysed reaction is malonyl-[ACP] + acetyl-CoA + H(+) = 3-oxobutanoyl-[ACP] + CO2 + CoA. The protein operates within lipid metabolism; fatty acid biosynthesis. Functionally, catalyzes the condensation reaction of fatty acid synthesis by the addition to an acyl acceptor of two carbons from malonyl-ACP. Catalyzes the first condensation reaction which initiates fatty acid synthesis and may therefore play a role in governing the total rate of fatty acid production. Possesses both acetoacetyl-ACP synthase and acetyl transacylase activities. Its substrate specificity determines the biosynthesis of branched-chain and/or straight-chain of fatty acids. In Clostridium novyi (strain NT), this protein is Beta-ketoacyl-[acyl-carrier-protein] synthase III.